We begin with the raw amino-acid sequence, 229 residues long: Potassium/proton antiporter CemA (229 aa).

The next 2 helical transmembrane spans lie at 114–134 (IIYF…LIIL) and 189–209 (IISG…KYWI).

Belongs to the CemA family.

It localises to the plastid. The protein resides in the chloroplast inner membrane. It catalyses the reaction K(+)(in) + H(+)(out) = K(+)(out) + H(+)(in). Functionally, contributes to K(+)/H(+) antiport activity by supporting proton efflux to control proton extrusion and homeostasis in chloroplasts in a light-dependent manner to modulate photosynthesis. Prevents excessive induction of non-photochemical quenching (NPQ) under continuous-light conditions. Indirectly promotes efficient inorganic carbon uptake into chloroplasts. This Lotus japonicus (Lotus corniculatus var. japonicus) protein is Potassium/proton antiporter CemA.